We begin with the raw amino-acid sequence, 118 residues long: Myotrophin (118 aa).

ANK repeat units follow at residues Met1–Arg30, Gly34–Asp65, and His67–Gly98.

It belongs to the myotrophin family.

The protein localises to the cytoplasm. It is found in the nucleus. The protein resides in the perinuclear region. Functionally, regulates NF-kappa-B transcription factor activity. Promotes growth of cardiomyocytes, but not cardiomyocyte proliferation. Promotes cardiac muscle hypertrophy. Plays a role in the regulation of the growth of actin filaments. Inhibits the activity of the F-actin-capping protein complex. The sequence is that of Myotrophin (mtpn) from Danio rerio (Zebrafish).